A 196-amino-acid polypeptide reads, in one-letter code: Recombination protein RecR (196 aa).

The C4-type zinc finger occupies 57-72 (CERCNTFTEAPVCSTC). One can recognise a Toprim domain in the interval 80 to 175 (RQLCVVETPA…SVTRLARGVP (96 aa)).

It belongs to the RecR family.

In terms of biological role, may play a role in DNA repair. It seems to be involved in an RecBC-independent recombinational process of DNA repair. It may act with RecF and RecO. The protein is Recombination protein RecR of Methylibium petroleiphilum (strain ATCC BAA-1232 / LMG 22953 / PM1).